Reading from the N-terminus, the 88-residue chain is Small ribosomal subunit protein uS17 (88 aa).

It belongs to the universal ribosomal protein uS17 family. In terms of assembly, part of the 30S ribosomal subunit.

In terms of biological role, one of the primary rRNA binding proteins, it binds specifically to the 5'-end of 16S ribosomal RNA. In Prochlorococcus marinus subsp. pastoris (strain CCMP1986 / NIES-2087 / MED4), this protein is Small ribosomal subunit protein uS17.